A 98-amino-acid polypeptide reads, in one-letter code: Large ribosomal subunit protein uL23 (98 aa).

It belongs to the universal ribosomal protein uL23 family. In terms of assembly, part of the 50S ribosomal subunit. Contacts protein L29, and trigger factor when it is bound to the ribosome.

In terms of biological role, one of the early assembly proteins it binds 23S rRNA. One of the proteins that surrounds the polypeptide exit tunnel on the outside of the ribosome. Forms the main docking site for trigger factor binding to the ribosome. This is Large ribosomal subunit protein uL23 from Cereibacter sphaeroides (strain ATCC 17025 / ATH 2.4.3) (Rhodobacter sphaeroides).